Reading from the N-terminus, the 436-residue chain is tRNA(Ile)-lysidine synthase (436 aa).

An ATP-binding site is contributed by 27 to 32; sequence SGGVDS.

The protein belongs to the tRNA(Ile)-lysidine synthase family.

It is found in the cytoplasm. It carries out the reaction cytidine(34) in tRNA(Ile2) + L-lysine + ATP = lysidine(34) in tRNA(Ile2) + AMP + diphosphate + H(+). Functionally, ligates lysine onto the cytidine present at position 34 of the AUA codon-specific tRNA(Ile) that contains the anticodon CAU, in an ATP-dependent manner. Cytidine is converted to lysidine, thus changing the amino acid specificity of the tRNA from methionine to isoleucine. This chain is tRNA(Ile)-lysidine synthase, found in Vibrio vulnificus (strain YJ016).